The primary structure comprises 513 residues: MSWPRIGAYALLAFVAIMALNVTYQFLFRMLNKTRPPLVFHWIPFIGSTIHYGMDPYGFFFSCREKYGDIFTFILLGRPTTVYLGTQGNEFILNGKLKDVNAEEVYSPLTTPVFGSDVVYDCPNSKLIEQKKFIKFGLSQAALEAHVPLIEKEVEDYLAMSPNFHGTSGEVDIPAAMAEITIFTAGSALQGEEVRSKLTTEFAVLYHDLDKGFTPINFMLPWAPLPHNKKRDAAHARMRSIYIDIINKRRNAGDNVPEKLDMIGNLMQCTYKNGQPLPDKEIAHIMITLLMAGQHSSSSISSWIMLRLASQPAVVEELYQEQLANLERTGPNGSLAPLQYKDFDNLPLHQNVIRETLRLHSSIHSLLRKVKNPLPVPGTPYVIPTSHVLLAAPGVTALSDEYFPNAMAWDPHRWETQAPQENNKDDIVDYGYGAMSKGTSSPYLPFGAGRHRCIGEKFAYLNLAVIVATMVRHLRFSNLDGQTGVPDTDYSSLFSGPMKPARIRWERRAAKSG.

A helical transmembrane segment spans residues 8 to 28 (AYALLAFVAIMALNVTYQFLF). N-linked (GlcNAc...) asparagine glycans are attached at residues Asn-32 and Asn-332. Cys-453 lines the heme pocket.

This sequence belongs to the cytochrome P450 family. Heme is required as a cofactor.

The protein localises to the endoplasmic reticulum membrane. The catalysed reaction is a 14alpha-methyl steroid + 3 reduced [NADPH--hemoprotein reductase] + 3 O2 = a Delta(14) steroid + formate + 3 oxidized [NADPH--hemoprotein reductase] + 4 H2O + 4 H(+). It carries out the reaction a 14alpha-methyl steroid + reduced [NADPH--hemoprotein reductase] + O2 = a 14alpha-hydroxymethyl steroid + oxidized [NADPH--hemoprotein reductase] + H2O + H(+). The enzyme catalyses a 14alpha-hydroxymethyl steroid + reduced [NADPH--hemoprotein reductase] + O2 = a 14alpha-formyl steroid + oxidized [NADPH--hemoprotein reductase] + 2 H2O + H(+). It catalyses the reaction a 14alpha-formyl steroid + reduced [NADPH--hemoprotein reductase] + O2 = a Delta(14) steroid + formate + oxidized [NADPH--hemoprotein reductase] + H2O + 2 H(+). The catalysed reaction is lanosterol + 3 reduced [NADPH--hemoprotein reductase] + 3 O2 = 4,4-dimethyl-5alpha-cholesta-8,14,24-trien-3beta-ol + formate + 3 oxidized [NADPH--hemoprotein reductase] + 4 H2O + 4 H(+). It carries out the reaction lanosterol + reduced [NADPH--hemoprotein reductase] + O2 = 32-hydroxylanosterol + oxidized [NADPH--hemoprotein reductase] + H2O + H(+). The enzyme catalyses 32-hydroxylanosterol + reduced [NADPH--hemoprotein reductase] + O2 = 32-oxolanosterol + oxidized [NADPH--hemoprotein reductase] + 2 H2O + H(+). It catalyses the reaction 32-oxolanosterol + reduced [NADPH--hemoprotein reductase] + O2 = 4,4-dimethyl-5alpha-cholesta-8,14,24-trien-3beta-ol + formate + oxidized [NADPH--hemoprotein reductase] + H2O + 2 H(+). The catalysed reaction is eburicol + 3 reduced [NADPH--hemoprotein reductase] + 3 O2 = 14-demethyleburicol + formate + 3 oxidized [NADPH--hemoprotein reductase] + 4 H2O + 4 H(+). It carries out the reaction eburicol + reduced [NADPH--hemoprotein reductase] + O2 = 32-hydroxyeburicol + oxidized [NADPH--hemoprotein reductase] + H2O + H(+). The enzyme catalyses 32-hydroxyeburicol + reduced [NADPH--hemoprotein reductase] + O2 = 32-oxoeburicol + oxidized [NADPH--hemoprotein reductase] + 2 H2O + H(+). It catalyses the reaction 32-oxoeburicol + reduced [NADPH--hemoprotein reductase] + O2 = 14-demethyleburicol + formate + oxidized [NADPH--hemoprotein reductase] + H2O + 2 H(+). The protein operates within steroid biosynthesis; sterol biosynthesis. In terms of biological role, sterol 14alpha-demethylase, encoded by cyp51A, cyp51B and cyp51C, that plays a critical role in the third module of ergosterol biosynthesis pathway, being ergosterol the major sterol component in fungal membranes that participates in a variety of functions. The third module or late pathway involves the ergosterol synthesis itself through consecutive reactions that mainly occur in the endoplasmic reticulum (ER) membrane. In filamentous fungi, during the initial step of this module, lanosterol (lanosta-8,24-dien-3beta-ol) can be metabolized to eburicol. Sterol 14alpha-demethylase catalyzes the three-step oxidative removal of the 14alpha-methyl group (C-32) of both these sterols in the form of formate, and converts eburicol and lanosterol to 14-demethyleburicol (4,4,24-trimethylergosta-8,14,24(28)-trienol) and 4,4-dimethyl-5alpha-cholesta-8,14,24-trien-3beta-ol, respectively, which are further metabolized by other enzymes in the pathway to ergosterol. Can also use substrates not intrinsic to fungi, such as 24,25-dihydrolanosterol (DHL), producing 4,4'-dimethyl-8,14-cholestadien-3-beta-ol, but at lower rates than the endogenous substrates. Its function is as follows. As a target of azole drugs, plays a crucial role in azole drug susceptibility. The protein is Sterol 14-alpha demethylase of Aspergillus flavus (strain ATCC 200026 / FGSC A1120 / IAM 13836 / NRRL 3357 / JCM 12722 / SRRC 167).